The sequence spans 125 residues: Photoactive yellow protein (125 aa).

The PAS domain occupies 23 to 86 (IDDLAFGAIQ…GRFREGVANG (64 aa)). The residue at position 69 (Cys69) is an S-(4-hydroxycinnamyl)cysteine.

It belongs to the photoactive yellow protein family. The 4-hydroxycinnamic acid (p-coumaric acid) chromophore is covalently bound via a thioester linkage.

Functionally, this photoactive protein is a photoreceptor with kinetics similar to that of rhodopsin. The polypeptide is Photoactive yellow protein (pyp) (Rhodothalassium salexigens (Rhodospirillum salexigens)).